The chain runs to 374 residues: uncharacterized protein (374 aa).

The segment covering 86–104 has biased composition (low complexity); that stretch reads RPAATAGTTPATGASGSAR. Residues 86-109 are disordered; that stretch reads RPAATAGTTPATGASGSARPTDAA. In terms of domain architecture, Macro spans 179–354; that stretch reads WWRRSNTTRG…LQRVVFAVHG (176 aa).

This is an uncharacterized protein from Mycobacterium tuberculosis (strain CDC 1551 / Oshkosh).